A 380-amino-acid chain; its full sequence is Alpha-N-acetylneuraminate alpha-2,8-sialyltransferase ST8SIA3 (380 aa).

Over 1-9 (MRNCKMARV) the chain is Cytoplasmic. Residues 10–33 (ASVLGLVMLSVALLILSLISYVSL) traverse the membrane as a helical; Signal-anchor for type II membrane protein segment. Residues 34–380 (KKENIFTTPK…LTKLTLSHCA (347 aa)) lie on the Lumenal side of the membrane. Asn93, Asn113, and Asn160 each carry an N-linked (GlcNAc...) asparagine glycan. 2 cysteine pairs are disulfide-bonded: Cys162-Cys313 and Cys176-Cys379. Residues Asn167 and Asn190 each contribute to the CMP-N-acetyl-beta-neuraminate site. The N-linked (GlcNAc...) asparagine glycan is linked to Asn206. Ser300, Thr301, Gly302, Trp322, Tyr336, and His337 together coordinate CMP-N-acetyl-beta-neuraminate. Residue His354 is the Proton donor/acceptor of the active site.

The protein belongs to the glycosyltransferase 29 family. As to quaternary structure, homodimer. Post-translationally, autopolysialylated. In terms of tissue distribution, expressed in fetal and adult brain and fetal liver.

The protein resides in the golgi apparatus membrane. The catalysed reaction is [N-acetyl-alpha-D-neuraminosyl-(2-&gt;8)](n) + CMP-N-acetyl-beta-neuraminate = [N-acetyl-alpha-D-neuraminosyl-(2-&gt;8)](n+1) + CMP + H(+). It carries out the reaction alpha-Neu5Ac-(2-&gt;3)-beta-D-Gal-(1-&gt;4)-6S-D-GlcNAc + CMP-N-acetyl-beta-neuraminate = alpha-Neu5Ac-(2-&gt;8)-alpha-Neu5Ac-(2-&gt;3)-beta-D-Gal-(1-&gt;4)-6S-D-GlcNAc + CMP + H(+). It catalyses the reaction a ganglioside GM3 (d18:1(4E)) + CMP-N-acetyl-beta-neuraminate = a ganglioside GD3 (d18:1(4E)) + CMP + H(+). The enzyme catalyses a ganglioside GM3 + CMP-N-acetyl-beta-neuraminate = a ganglioside GD3 + CMP + H(+). The catalysed reaction is an N-acetyl-alpha-neuraminyl-(2-&gt;3)-beta-D-galactosyl derivative + CMP-N-acetyl-beta-neuraminate = an N-acetyl-alpha-neuraminyl-(2-&gt;8)-N-acetyl-alpha-neuraminyl-(2-&gt;3)-beta-D-galactosyl derivative + CMP + H(+). It carries out the reaction an N-acetyl-alpha-neuraminyl-(2-&gt;3)-beta-D-galactosyl-(1-&gt;4)-N-acetyl-beta-D-glucosaminyl derivative + CMP-N-acetyl-beta-neuraminate = an alpha-Neu5Ac-(2-&gt;8)-alpha-Neu5Ac-(2-&gt;3)-beta-D-Gal-(1-&gt;4)-beta-D-GlcNAc derivative + CMP + H(+). It functions in the pathway protein modification; protein glycosylation. Its function is as follows. Catalyzes the transfer of sialic acid from a CMP-linked sialic acid donor onto a terminal alpha-2,3-, alpha-2,6-, or alpha-2,8-linked sialic acid of an acceptor, such as N-linked oligosaccharides of glycoproteins and glycolipids through alpha-2,8-linkages. Forms oligosialic and polysialic acid on various sialylated N-acetyllactosamine oligosaccharides of glycoproteins, including FETUB N-glycans, a2-HS-glycoprotein (AHSG) and alpha 2,3-sialylated glycosphingolipids, such as alpha 2,3-sialylparagloboside and ganglioside GM3 and to a lesser extent NCAM1 N-glycans. However, it is much more specific to N-linked oligosaccharides of glycoproteins than glycosphingolipids. 2,3-sialylparagloboside serves as the best acceptor substrate among the glycolipids. alpha-Neu5Ac-(2-&gt;8)-alpha-Neu5Ac-(2-&gt;3)-beta-D-Gal-(1-&gt;4)-6S-D-GlcNAc and monosialyl and disialyl N-acetyllactosamines are the best acceptor substrates among glycoproteins. May plays critical role in the striatum by mediating the formation of disialylated and trisialylated terminal glycotopes on N- and O-glycans of specific striatal proteins, regulating their distribution in lipid rafts, affecting their interaction with other binding partners, and subsequently modulating striatal functions. In Homo sapiens (Human), this protein is Alpha-N-acetylneuraminate alpha-2,8-sialyltransferase ST8SIA3.